The chain runs to 341 residues: L-threonine 3-dehydrogenase (341 aa).

Cys-38 is a Zn(2+) binding site. Active-site charge relay system residues include Thr-40 and His-43. Positions 63, 64, 93, 96, 99, and 107 each coordinate Zn(2+). NAD(+) contacts are provided by residues Ile-175, Asp-195, Arg-200, 262–264, and 286–287; these read LGI and IY.

Belongs to the zinc-containing alcohol dehydrogenase family. Homotetramer. The cofactor is Zn(2+).

It localises to the cytoplasm. The enzyme catalyses L-threonine + NAD(+) = (2S)-2-amino-3-oxobutanoate + NADH + H(+). The protein operates within amino-acid degradation; L-threonine degradation via oxydo-reductase pathway; glycine from L-threonine: step 1/2. Catalyzes the NAD(+)-dependent oxidation of L-threonine to 2-amino-3-ketobutyrate. In Alteromonas mediterranea (strain DSM 17117 / CIP 110805 / LMG 28347 / Deep ecotype), this protein is L-threonine 3-dehydrogenase.